The chain runs to 161 residues: Nucleotide-binding protein Csal_2524 (161 aa).

Belongs to the YajQ family.

Functionally, nucleotide-binding protein. This Chromohalobacter salexigens (strain ATCC BAA-138 / DSM 3043 / CIP 106854 / NCIMB 13768 / 1H11) protein is Nucleotide-binding protein Csal_2524.